A 445-amino-acid chain; its full sequence is Enolase 2 (445 aa).

Substrate contacts are provided by histidine 164 and glutamate 173. The active-site Proton donor is glutamate 216. Residues aspartate 251, glutamate 301, and aspartate 328 each coordinate Mg(2+). Residues glutamate 301 and aspartate 328 each coordinate substrate. The Proton acceptor role is filled by lysine 353. Substrate is bound by residues 380-383 (SHRS) and lysine 404.

It belongs to the enolase family. In terms of assembly, homodimer. It depends on Mg(2+) as a cofactor.

It is found in the cytoplasm. The catalysed reaction is (2R)-2-phosphoglycerate = phosphoenolpyruvate + H2O. It participates in carbohydrate degradation; glycolysis; pyruvate from D-glyceraldehyde 3-phosphate: step 4/5. The chain is Enolase 2 (ENO2) from Hevea brasiliensis (Para rubber tree).